Consider the following 77-residue polypeptide: Large ribosomal subunit protein bL28 (77 aa).

The protein belongs to the bacterial ribosomal protein bL28 family.

This chain is Large ribosomal subunit protein bL28, found in Polaromonas naphthalenivorans (strain CJ2).